Here is a 135-residue protein sequence, read N- to C-terminus: S-protein homolog 7 (135 aa).

An N-terminal signal peptide occupies residues 1-20 (MNNLFVLVIIIVLSAGSNNG).

It belongs to the plant self-incompatibility (S1) protein family.

The protein resides in the secreted. The polypeptide is S-protein homolog 7 (Arabidopsis thaliana (Mouse-ear cress)).